The chain runs to 232 residues: Platelet-activating factor acetylhydrolase IB subunit alpha1 (232 aa).

The segment at 1–20 (MSGEGENPASKPTPVQDVQG) is disordered. Serine 2 carries the N-acetylserine modification. The residue at position 2 (serine 2) is a Phosphoserine. Active-site residues include serine 48, aspartate 193, and histidine 196.

Belongs to the 'GDSL' lipolytic enzyme family. Platelet-activating factor acetylhydrolase IB beta/gamma subunits subfamily. As to quaternary structure, forms a catalytic dimer which is either homodimer (alpha1/alpha1 homodimer) or heterodimer with PAFAH1B2 (alpha1/alpha2 heterodimer). Component of the cytosolic (PAF-AH (I)) heterotetrameric enzyme, which is composed of PAFAH1B1 (beta), PAFAH1B2 (alpha2) and PAFAH1B3 (alpha1) subunits. The catalytic activity of the enzyme resides in the alpha1 (PAFAH1B3) and alpha2 (PAFAH1B2) subunits, whereas the beta subunit (PAFAH1B1) has regulatory activity. Trimer formation is not essential for the catalytic activity. Interacts with VLDLR; this interaction may modulate the Reelin pathway. As to expression, expressed in brain, spleen, lung, liver, kidney and testis. Not expressed in heart and skeletal muscle. Expressed in fetal brain as heterodimer. Not expressed in adult tissues. Expressed exclusively in granule cells.

The protein resides in the cytoplasm. The enzyme catalyses a 1-O-alkyl-2-acetyl-sn-glycero-3-phosphocholine + H2O = a 1-O-alkyl-sn-glycero-3-phosphocholine + acetate + H(+). The catalysed reaction is 1-O-hexadecyl-2-acetyl-sn-glycero-3-phosphocholine + H2O = 1-O-hexadecyl-sn-glycero-3-phosphocholine + acetate + H(+). It carries out the reaction 1-O-hexadecyl-2-acetyl-sn-glycero-3-phosphate + H2O = 1-O-hexadecyl-sn-glycero-3-phosphate + acetate + H(+). Beta subunit (PAFAH1B1) inhibits the acetylhydrolase activity of the alpha1/alpha1 catalytic homodimer. In terms of biological role, alpha1 catalytic subunit of the cytosolic type I platelet-activating factor (PAF) acetylhydrolase (PAF-AH (I)) heterotetrameric enzyme that catalyzes the hydrolyze of the acetyl group at the sn-2 position of PAF and its analogs and modulates the action of PAF. The activity and substrate specificity of PAF-AH (I) are affected by its subunit composition. Both alpha1/alpha1 homodimer (PAFAH1B3/PAFAH1B3 homodimer) and alpha1/alpha2 heterodimer(PAFAH1B3/PAFAH1B2 heterodimer) hydrolyze 1-O-alkyl-2-acetyl-sn-glycero-3-phosphoric acid (AAGPA) more efficiently than PAF, but they have little hydrolytic activity towards 1-O-alkyl-2-acetyl-sn-glycero-3-phosphorylethanolamine (AAGPE). Plays an important role during the development of brain. In Rattus norvegicus (Rat), this protein is Platelet-activating factor acetylhydrolase IB subunit alpha1.